The sequence spans 525 residues: GMP synthase [glutamine-hydrolyzing] (525 aa).

Positions 9–207 constitute a Glutamine amidotransferase type-1 domain; it reads RILILDFGSQ…VKEICHCEAL (199 aa). C86 serves as the catalytic Nucleophile. Catalysis depends on residues H181 and E183. One can recognise a GMPS ATP-PPase domain in the interval 208-400; sequence WTPATIIEDA…LGLPYNMLYR (193 aa). 235–241 is an ATP binding site; it reads SGGVDSS.

As to quaternary structure, homodimer.

It carries out the reaction XMP + L-glutamine + ATP + H2O = GMP + L-glutamate + AMP + diphosphate + 2 H(+). Its pathway is purine metabolism; GMP biosynthesis; GMP from XMP (L-Gln route): step 1/1. Catalyzes the synthesis of GMP from XMP. The polypeptide is GMP synthase [glutamine-hydrolyzing] (Tolumonas auensis (strain DSM 9187 / NBRC 110442 / TA 4)).